The sequence spans 957 residues: Glycine dehydrogenase (decarboxylating) (957 aa).

At K708 the chain carries N6-(pyridoxal phosphate)lysine.

It belongs to the GcvP family. As to quaternary structure, the glycine cleavage system is composed of four proteins: P, T, L and H. It depends on pyridoxal 5'-phosphate as a cofactor.

It carries out the reaction N(6)-[(R)-lipoyl]-L-lysyl-[glycine-cleavage complex H protein] + glycine + H(+) = N(6)-[(R)-S(8)-aminomethyldihydrolipoyl]-L-lysyl-[glycine-cleavage complex H protein] + CO2. In terms of biological role, the glycine cleavage system catalyzes the degradation of glycine. The P protein binds the alpha-amino group of glycine through its pyridoxal phosphate cofactor; CO(2) is released and the remaining methylamine moiety is then transferred to the lipoamide cofactor of the H protein. This is Glycine dehydrogenase (decarboxylating) from Salmonella newport (strain SL254).